The following is a 387-amino-acid chain: MKQAVIVDCIRTPMGRSKAGVFRNVRAETLSAELMKGLLLRNPQLDPNTIEDVIWGCVQQTLEQGFNIARNASLLAGIPKTAGAVTVNRLCGSSMEAIHQAARAIMTGMGDTFIIGGVEHMGHVPMNHGVDFHPGLANNVAKASGMMGLTAEMLGKLHGITREQQDAFAVRSHQRAHAATVEGRFAKEIYGIEGHDANGALIKVLHDEVIRPETSMESLAALRPVFDPANGTVTAGTSSALSDGASAMLVMEESKARALGLPIRARIRSMAVAGCDAAIMGYGPVPATQKALARAGITVNDLDVIELNEAFAAQSLPCVKDLGLLDVVDEKINLNGGAIALGHPLGCSGARISTTLINLMEHKDATLGLATMCIGLGQGIATVFERV.

Catalysis depends on C91, which acts as the Acyl-thioester intermediate. Catalysis depends on proton acceptor residues H343 and C373.

Belongs to the thiolase-like superfamily. Thiolase family. As to quaternary structure, heterotetramer of two alpha chains (FadB) and two beta chains (FadA).

The protein localises to the cytoplasm. It catalyses the reaction an acyl-CoA + acetyl-CoA = a 3-oxoacyl-CoA + CoA. It participates in lipid metabolism; fatty acid beta-oxidation. Functionally, catalyzes the final step of fatty acid oxidation in which acetyl-CoA is released and the CoA ester of a fatty acid two carbons shorter is formed. This chain is 3-ketoacyl-CoA thiolase, found in Shewanella sp. (strain MR-4).